A 299-amino-acid chain; its full sequence is GTPase Era (299 aa).

An Era-type G domain is found at 5-175 (RSGFVCLVGR…IDVLAAALPP (171 aa)). The G1 stretch occupies residues 13 to 20 (GRPNTGKS). 13–20 (GRPNTGKS) is a GTP binding site. Residues 39-43 (QTTRH) form a G2 region. Positions 60 to 63 (DTPG) are G3. GTP is bound by residues 60 to 64 (DTPGL) and 124 to 127 (TKID). Residues 124 to 127 (TKID) are G4. Residues 154–156 (VSA) form a G5 region. Residues 206–285 (VRDELPHSLA…YLDLRVKVAK (80 aa)) form the KH type-2 domain.

The protein belongs to the TRAFAC class TrmE-Era-EngA-EngB-Septin-like GTPase superfamily. Era GTPase family. Monomer.

The protein localises to the cell envelope. It localises to the secreted. It is found in the cell wall. Exhibits GTPase activity. Binds RNA but is probably not involved in ribosome assembly in mycobacteria. In Mycobacterium avium (strain 104), this protein is GTPase Era.